Here is a 203-residue protein sequence, read N- to C-terminus: Formate hydrogenlyase subunit 2 (203 aa).

4 consecutive 4Fe-4S ferredoxin-type domains span residues 2–32 (NRFVIADSTLCIGCHTCEAACSETHRQHGLQ), 42–72 (NEKESAPQLCHHCEDAPCAVVCPVNAITRVD), 73–102 (GAVQLNESLCVSCKLCGIACPFGAIEFSGS), and 137–169 (RAIAVKCDLCSFDEQGPACVRMCPTKALHLVDN). 16 residues coordinate [4Fe-4S] cluster: Cys12, Cys15, Cys18, Cys22, Cys51, Cys54, Cys59, Cys63, Cys82, Cys85, Cys88, Cys92, Cys143, Cys146, Cys155, and Cys159.

In terms of assembly, FHL comprises of a formate dehydrogenase, unidentified electron carriers and a hydrogenase (isoenzyme 3). In this non-energy conserving pathway, molecular hydrogen and carbodioxide are released from formate. The cofactor is [4Fe-4S] cluster.

Functionally, probable electron transfer protein for hydrogenase 3. The sequence is that of Formate hydrogenlyase subunit 2 (hycB) from Escherichia coli (strain K12).